A 299-amino-acid chain; its full sequence is MSDPNLNASHDSVESVEDELDIVEAADAVDPDEAELADAEAGAPAEEAALHVESDEDEDEADVEVDAAVEEAADDAEVAEEEAEEAAPVEPAEPVDPIQALREELRLLPGEWYVIHTYAGYEKRVKANLEQRAVSLNVEEFIYQAEVPEEEIVQIKNGERKNVRQNKLPGYVLVRMDLTNESWGVVRNTPGVTGFVGNAYDPYPLTLDEIVKMLAPEAQEKAAKAAAEEAGLPAPAVKRTIEVLDFEVGDSVTVTDGPFATLQATINEINPDSKKVKGLVEIFGRETPVELSFDQIQKN.

The disordered stretch occupies residues 30–96 (DPDEAELADA…APVEPAEPVD (67 aa)). A run of 2 repeats spans residues 46–49 (EEAA) and 70–73 (EEAA). The interval 46–87 (EEAALHVESDEDEDEADVEVDAAVEEAADDAEVAEEEAEEAA) is 4 X 4 AA repeats of E-E-A-A. The segment covering 54 to 87 (SDEDEDEADVEVDAAVEEAADDAEVAEEEAEEAA) has biased composition (acidic residues). One copy of the 3; approximate repeat lies at 80 to 83 (EEEA). The stretch at 84–87 (EEAA) is repeat 4. In terms of domain architecture, KOW spans 248-276 (VGDSVTVTDGPFATLQATINEINPDSKKV).

It belongs to the NusG family. In terms of processing, the N-terminus is blocked.

Functionally, participates in transcription elongation, termination and antitermination. The chain is Transcription termination/antitermination protein NusG from Streptomyces virginiae (Streptomyces cinnamonensis).